The chain runs to 2028 residues: Pecanex-like protein 3 (2028 aa).

Transmembrane regions (helical) follow at residues C33–L53 and P54–I74. N95 carries N-linked (GlcNAc...) asparagine glycosylation. The disordered stretch occupies residues S96–P116. The residue at position 127 (S127) is a Phosphoserine. T129 carries the post-translational modification Phosphothreonine. Disordered regions lie at residues I193–P239 and L263–R625. A compositionally biased stretch (pro residues) spans Q198–S208. Basic and acidic residues-rich tracts occupy residues L263 to C273 and T305 to N319. An N-linked (GlcNAc...) asparagine glycan is attached at N319. T370 is modified (phosphothreonine). Phosphoserine occurs at positions 392 and 431. A compositionally biased stretch (polar residues) spans G427 to R437. The span at T444 to Q459 shows a compositional bias: low complexity. The span at T488 to A497 shows a compositional bias: polar residues. 2 positions are modified to phosphoserine: S505 and S521. The next 7 helical transmembrane spans lie at N793–F815, I819–L836, W852–L872, P880–A900, V903–V923, S946–C968, and H980–S1000. Residue S1025 is modified to Phosphoserine. A run of 4 helical transmembrane segments spans residues L1053–I1073, V1078–L1098, F1244–A1264, and L1280–M1300. Position 1697 is a phosphoserine (S1697). N1770 is a glycosylation site (N-linked (GlcNAc...) asparagine). The interval G1845–Y2028 is disordered. The span at R1890 to P1921 shows a compositional bias: pro residues. Residues S1909 and S1955 each carry the phosphoserine modification. A compositionally biased stretch (low complexity) spans P1966–S1977. Residues E1978–D1987 show a composition bias toward polar residues.

This sequence belongs to the pecanex family.

Its subcellular location is the membrane. This Mus musculus (Mouse) protein is Pecanex-like protein 3.